The sequence spans 316 residues: 4-hydroxy-3-methylbut-2-enyl diphosphate reductase (316 aa).

Cysteine 12 contributes to the [4Fe-4S] cluster binding site. Positions 41 and 74 each coordinate (2E)-4-hydroxy-3-methylbut-2-enyl diphosphate. Positions 41 and 74 each coordinate dimethylallyl diphosphate. Isopentenyl diphosphate-binding residues include histidine 41 and histidine 74. Cysteine 96 is a [4Fe-4S] cluster binding site. Histidine 124 contacts (2E)-4-hydroxy-3-methylbut-2-enyl diphosphate. Histidine 124 is a dimethylallyl diphosphate binding site. Histidine 124 lines the isopentenyl diphosphate pocket. Residue glutamate 126 is the Proton donor of the active site. Threonine 168 contacts (2E)-4-hydroxy-3-methylbut-2-enyl diphosphate. Cysteine 198 serves as a coordination point for [4Fe-4S] cluster. The (2E)-4-hydroxy-3-methylbut-2-enyl diphosphate site is built by serine 226, serine 227, asparagine 228, and serine 270. Dimethylallyl diphosphate contacts are provided by serine 226, serine 227, asparagine 228, and serine 270. Serine 226, serine 227, asparagine 228, and serine 270 together coordinate isopentenyl diphosphate.

This sequence belongs to the IspH family. Requires [4Fe-4S] cluster as cofactor.

The enzyme catalyses isopentenyl diphosphate + 2 oxidized [2Fe-2S]-[ferredoxin] + H2O = (2E)-4-hydroxy-3-methylbut-2-enyl diphosphate + 2 reduced [2Fe-2S]-[ferredoxin] + 2 H(+). It carries out the reaction dimethylallyl diphosphate + 2 oxidized [2Fe-2S]-[ferredoxin] + H2O = (2E)-4-hydroxy-3-methylbut-2-enyl diphosphate + 2 reduced [2Fe-2S]-[ferredoxin] + 2 H(+). Its pathway is isoprenoid biosynthesis; dimethylallyl diphosphate biosynthesis; dimethylallyl diphosphate from (2E)-4-hydroxy-3-methylbutenyl diphosphate: step 1/1. It participates in isoprenoid biosynthesis; isopentenyl diphosphate biosynthesis via DXP pathway; isopentenyl diphosphate from 1-deoxy-D-xylulose 5-phosphate: step 6/6. Its function is as follows. Catalyzes the conversion of 1-hydroxy-2-methyl-2-(E)-butenyl 4-diphosphate (HMBPP) into a mixture of isopentenyl diphosphate (IPP) and dimethylallyl diphosphate (DMAPP). Acts in the terminal step of the DOXP/MEP pathway for isoprenoid precursor biosynthesis. The protein is 4-hydroxy-3-methylbut-2-enyl diphosphate reductase of Marinobacter nauticus (strain ATCC 700491 / DSM 11845 / VT8) (Marinobacter aquaeolei).